Reading from the N-terminus, the 453-residue chain is tRNA modification GTPase MnmE (453 aa).

Residues arginine 22, glutamate 79, and lysine 119 each coordinate (6S)-5-formyl-5,6,7,8-tetrahydrofolate. One can recognise a TrmE-type G domain in the interval 215 to 376 (GMKVVIAGRP…LKLHLKSLMG (162 aa)). Asparagine 225 is a K(+) binding site. GTP is bound by residues 225–230 (NAGKSS), 244–250 (TEIAGTT), 269–272 (DTAG), and 334–337 (NKAD). A Mg(2+)-binding site is contributed by serine 229. Residues threonine 244, isoleucine 246, and threonine 249 each coordinate K(+). Threonine 250 serves as a coordination point for Mg(2+). Lysine 453 is a (6S)-5-formyl-5,6,7,8-tetrahydrofolate binding site.

This sequence belongs to the TRAFAC class TrmE-Era-EngA-EngB-Septin-like GTPase superfamily. TrmE GTPase family. Homodimer. Heterotetramer of two MnmE and two MnmG subunits. It depends on K(+) as a cofactor.

The protein localises to the cytoplasm. Its function is as follows. Exhibits a very high intrinsic GTPase hydrolysis rate. Involved in the addition of a carboxymethylaminomethyl (cmnm) group at the wobble position (U34) of certain tRNAs, forming tRNA-cmnm(5)s(2)U34. The polypeptide is tRNA modification GTPase MnmE (Shewanella putrefaciens (strain CN-32 / ATCC BAA-453)).